We begin with the raw amino-acid sequence, 664 residues long: Transketolase 1 (664 aa).

A substrate-binding site is contributed by His26. Thiamine diphosphate is bound by residues His66 and 114-116 (GPL). Asp155 is a binding site for Mg(2+). Positions 156 and 185 each coordinate thiamine diphosphate. Mg(2+) is bound by residues Asn185 and Ile187. The substrate site is built by His260, Arg357, and Ser384. Position 260 (His260) interacts with thiamine diphosphate. Residue Glu411 is the Proton donor of the active site. Phe437 lines the thiamine diphosphate pocket. Substrate is bound by residues His461, Asp469, and Arg520.

Belongs to the transketolase family. In terms of assembly, homodimer. Mg(2+) is required as a cofactor. Requires Ca(2+) as cofactor. It depends on Mn(2+) as a cofactor. Co(2+) serves as cofactor. The cofactor is thiamine diphosphate.

The catalysed reaction is D-sedoheptulose 7-phosphate + D-glyceraldehyde 3-phosphate = aldehydo-D-ribose 5-phosphate + D-xylulose 5-phosphate. Catalyzes the transfer of a two-carbon ketol group from a ketose donor to an aldose acceptor, via a covalent intermediate with the cofactor thiamine pyrophosphate. The sequence is that of Transketolase 1 (tkt1) from Vibrio vulnificus (strain YJ016).